A 70-amino-acid polypeptide reads, in one-letter code: Adenylate kinase (70 aa).

An ATP-binding site is contributed by 10 to 15 (GAGKGT). The tract at residues 30 to 59 (STGDLFRANISKQTELGKLAKSYMDKGELV) is NMP. AMP is bound by residues T31, R36, and 57 to 59 (ELV).

It belongs to the adenylate kinase family. Monomer.

The protein resides in the cytoplasm. The enzyme catalyses AMP + ATP = 2 ADP. The protein operates within purine metabolism; AMP biosynthesis via salvage pathway; AMP from ADP: step 1/1. In terms of biological role, catalyzes the reversible transfer of the terminal phosphate group between ATP and AMP. Plays an important role in cellular energy homeostasis and in adenine nucleotide metabolism. This chain is Adenylate kinase (adk), found in Streptomyces scabiei.